The chain runs to 359 residues: Membrane-bound lytic murein transglycosylase C (359 aa).

The signal sequence occupies residues 1-16; the sequence is MKKYLALALIAPLLIS. A lipid anchor (N-palmitoyl cysteine) is attached at cysteine 17. Cysteine 17 carries S-diacylglycerol cysteine lipidation.

The protein belongs to the transglycosylase Slt family.

It localises to the cell outer membrane. It carries out the reaction Exolytic cleavage of the (1-&gt;4)-beta-glycosidic linkage between N-acetylmuramic acid (MurNAc) and N-acetylglucosamine (GlcNAc) residues in peptidoglycan, from either the reducing or the non-reducing ends of the peptidoglycan chains, with concomitant formation of a 1,6-anhydrobond in the MurNAc residue.. Functionally, murein-degrading enzyme. May play a role in recycling of muropeptides during cell elongation and/or cell division. The sequence is that of Membrane-bound lytic murein transglycosylase C from Shigella sonnei (strain Ss046).